The chain runs to 400 residues: Argininosuccinate synthase (400 aa).

Position 8-16 (8-16 (AYSGGLDTS)) interacts with ATP. Position 87 (Y87) interacts with L-citrulline. An ATP-binding site is contributed by G117. Residues T119, N123, and D124 each contribute to the L-aspartate site. N123 contributes to the L-citrulline binding site. 4 residues coordinate L-citrulline: R127, S175, E260, and Y272.

Belongs to the argininosuccinate synthase family. Type 1 subfamily. Homotetramer.

The protein localises to the cytoplasm. It catalyses the reaction L-citrulline + L-aspartate + ATP = 2-(N(omega)-L-arginino)succinate + AMP + diphosphate + H(+). It participates in amino-acid biosynthesis; L-arginine biosynthesis; L-arginine from L-ornithine and carbamoyl phosphate: step 2/3. The polypeptide is Argininosuccinate synthase (Mycolicibacterium gilvum (strain PYR-GCK) (Mycobacterium gilvum (strain PYR-GCK))).